Consider the following 329-residue polypeptide: Alpha-tubulin N-acetyltransferase 1 (329 aa).

An N-acetyltransferase domain is found at Ser-5–Phe-185. Acetyl-CoA is bound by residues Phe-119–Lys-132 and Ser-155–Lys-164. Disordered regions lie at residues Pro-218–Lys-261 and Gly-306–His-329. Residues Tyr-220–Asn-229 show a composition bias toward polar residues. A compositionally biased stretch (pro residues) spans Thr-238–Val-249. Positions Pro-313–His-329 are enriched in polar residues.

It belongs to the acetyltransferase ATAT1 family.

The enzyme catalyses L-lysyl-[alpha-tubulin] + acetyl-CoA = N(6)-acetyl-L-lysyl-[alpha-tubulin] + CoA + H(+). Functionally, specifically acetylates 'Lys-40' in alpha-tubulin on the lumenal side of microtubules. Promotes microtubule destabilization and accelerates microtubule dynamics; this activity may be independent of acetylation activity. Acetylates alpha-tubulin with a slow enzymatic rate, due to a catalytic site that is not optimized for acetyl transfer. Enters the microtubule through each end and diffuses quickly throughout the lumen of microtubules. Acetylates only long/old microtubules because of its slow acetylation rate since it does not have time to act on dynamically unstable microtubules before the enzyme is released. This is Alpha-tubulin N-acetyltransferase 1 from Trypanosoma cruzi (strain CL Brener).